The primary structure comprises 243 residues: Interleukin-27 subunit alpha (243 aa).

Positions 1 to 28 (MGQTAGDLGWRLSLLLLPLLLVQAGVWG) are cleaved as a signal peptide.

Belongs to the IL-6 superfamily. In terms of assembly, heterodimer with EBI3; not disulfide-linked. This heterodimer is known as interleukin IL-27. In terms of processing, O-glycosylated. Expressed in monocytes and in placenta.

It is found in the secreted. Associates with EBI3 to form the IL-27 interleukin, a heterodimeric cytokine which functions in innate immunity. IL-27 has pro- and anti-inflammatory properties, that can regulate T-helper cell development, suppress T-cell proliferation, stimulate cytotoxic T-cell activity, induce isotype switching in B-cells, and that has diverse effects on innate immune cells. Among its target cells are CD4 T-helper cells which can differentiate in type 1 effector cells (TH1), type 2 effector cells (TH2) and IL17 producing helper T-cells (TH17). It drives rapid clonal expansion of naive but not memory CD4 T-cells. It also strongly synergizes with IL-12 to trigger interferon-gamma/IFN-gamma production of naive CD4 T-cells, binds to the cytokine receptor WSX-1/TCCR which appears to be required but not sufficient for IL-27-mediated signal transduction. IL-27 potentiate the early phase of TH1 response and suppress TH2 and TH17 differentiation. It induces the differentiation of TH1 cells via two distinct pathways, p38 MAPK/TBX21- and ICAM1/ITGAL/ERK-dependent pathways. It also induces STAT1, STAT3, STAT4 and STAT5 phosphorylation and activates TBX21/T-Bet via STAT1 with resulting IL12RB2 up-regulation, an event crucial to TH1 cell commitment. It suppresses the expression of GATA3, the inhibitor TH1 cells development. In CD8 T-cells, it activates STATs as well as GZMB. IL-27 reveals to be a potent inhibitor of TH17 cell development and of IL-17 production. Indeed IL27 alone is also able to inhibit the production of IL17 by CD4 and CD8 T-cells. While IL-27 suppressed the development of pro-inflammatory Th17 cells via STAT1, it inhibits the development of anti-inflammatory inducible regulatory T-cells, iTreg, independently of STAT1. IL-27 also has an effect on cytokine production, it suppresses pro-inflammatory cytokine production such as IL2, IL4, IL5 and IL6 and activates suppressors of cytokine signaling such as SOCS1 and SOCS3. Apart from suppression of cytokine production, IL-27 also antagonizes the effects of some cytokines such as IL6 through direct effects on T-cells. Another important role of IL-27 is its antitumor activity as well as its antiangiogenic activity with activation of production of antiangiogenic chemokines such as IP-10/CXCL10 and MIG/CXCL9. In vein endothelial cells, it induces IRF1/interferon regulatory factor 1 and increase the expression of MHC class II transactivator/CIITA with resulting up-regulation of major histocompatibility complex class II. IL-27 also demonstrates antiviral activity with inhibitory properties on HIV-1 replication. The polypeptide is Interleukin-27 subunit alpha (IL27) (Homo sapiens (Human)).